The sequence spans 448 residues: Phosphoglucosamine mutase (448 aa).

The Phosphoserine intermediate role is filled by Ser100. Mg(2+) contacts are provided by Ser100, Asp240, Asp242, and Asp244. Residue Ser100 is modified to Phosphoserine.

Belongs to the phosphohexose mutase family. Mg(2+) serves as cofactor. Post-translationally, activated by phosphorylation.

The catalysed reaction is alpha-D-glucosamine 1-phosphate = D-glucosamine 6-phosphate. In terms of biological role, catalyzes the conversion of glucosamine-6-phosphate to glucosamine-1-phosphate. This is Phosphoglucosamine mutase from Clostridium tetani (strain Massachusetts / E88).